A 364-amino-acid chain; its full sequence is tRNA-specific 2-thiouridylase MnmA 1 (364 aa).

ATP contacts are provided by residues 10-17 (GMSGGVDS) and methionine 36. The Nucleophile role is filled by cysteine 106. A disulfide bridge connects residues cysteine 106 and cysteine 204. Position 130 (glycine 130) interacts with ATP. The segment at 154 to 156 (KDQ) is interaction with tRNA. Residue cysteine 204 is the Cysteine persulfide intermediate of the active site. The interval 310–311 (RY) is interaction with tRNA.

Belongs to the MnmA/TRMU family.

It localises to the cytoplasm. The enzyme catalyses S-sulfanyl-L-cysteinyl-[protein] + uridine(34) in tRNA + AH2 + ATP = 2-thiouridine(34) in tRNA + L-cysteinyl-[protein] + A + AMP + diphosphate + H(+). Its function is as follows. Catalyzes the 2-thiolation of uridine at the wobble position (U34) of tRNA, leading to the formation of s(2)U34. In Caldanaerobacter subterraneus subsp. tengcongensis (strain DSM 15242 / JCM 11007 / NBRC 100824 / MB4) (Thermoanaerobacter tengcongensis), this protein is tRNA-specific 2-thiouridylase MnmA 1.